A 1891-amino-acid chain; its full sequence is TATA-binding protein-associated factor mot1 (1891 aa).

Residues 30–68 form an HEAT 1 repeat; sequence PDELFNLLGRILPYLRSKSWDTRAAAAKAIGLIVANADT. Disordered stretches follow at residues 184 to 216, 241 to 283, and 295 to 316; these read FVAS…LSKR, LSSR…LDRS, and FKGA…EGPN. A compositionally biased stretch (basic and acidic residues) spans 264–275; that stretch reads ENGEERNGDSKP. HEAT repeat units lie at residues 473–511 and 569–606; these read SKLM…EFVK and SSFG…LEGE. Residues 699-710 are compositionally biased toward low complexity; sequence SAAAPARSSPAS. Residues 699–740 form a disordered region; that stretch reads SAAAPARSSPASNTPEGTKGRRRKSEKKEAPPPSAHNVDGHM. 4 HEAT repeats span residues 957–996, 1139–1177, 1181–1216, and 1219–1257; these read PKKP…YYTT, YPWV…VITV, TMLV…VMED, and LPYV…LVPL. In terms of domain architecture, Helicase ATP-binding spans 1316–1489; it reads AFLNRYNLHG…WSLFDFLMPG (174 aa). An ATP-binding site is contributed by 1329–1336; it reads DDMGLGKT. Positions 1440 to 1443 match the DEAH box motif; sequence DEGH. Residues 1526–1565 form an HEAT 8 repeat; sequence EALHKQVLPFLLRRLKEEVLNDLPPKIIQNYYCDPSELQR. The Helicase C-terminal domain occupies 1663-1813; sequence DLSGASYVSP…STVVNQQNAG (151 aa).

It belongs to the SNF2/RAD54 helicase family. In terms of assembly, forms the NCT transcriptional regulatory complex with nctA and nctB.

It localises to the nucleus. In terms of biological role, regulates transcription in association with TATA binding protein (TBP). Removes TBP from the TATA box via its C-terminal ATPase activity. Both transcription activation and repression require its ATPase activity. Part of the NCT transcriptional regulatory complex that acts as a key regulator of ergosterol biosynthesis and the azole exporter cdr1B. The NCT complex binds the promoters of genes linked to azole susceptibility, and especially represses the expression of cdr1B transporter. This is TATA-binding protein-associated factor mot1 from Aspergillus fumigatus (strain ATCC MYA-4609 / CBS 101355 / FGSC A1100 / Af293) (Neosartorya fumigata).